A 172-amino-acid polypeptide reads, in one-letter code: Protein GrpE (172 aa).

This sequence belongs to the GrpE family. In terms of assembly, homodimer.

It localises to the cytoplasm. Its function is as follows. Participates actively in the response to hyperosmotic and heat shock by preventing the aggregation of stress-denatured proteins, in association with DnaK and GrpE. It is the nucleotide exchange factor for DnaK and may function as a thermosensor. Unfolded proteins bind initially to DnaJ; upon interaction with the DnaJ-bound protein, DnaK hydrolyzes its bound ATP, resulting in the formation of a stable complex. GrpE releases ADP from DnaK; ATP binding to DnaK triggers the release of the substrate protein, thus completing the reaction cycle. Several rounds of ATP-dependent interactions between DnaJ, DnaK and GrpE are required for fully efficient folding. The chain is Protein GrpE from Thermotoga sp. (strain RQ2).